Reading from the N-terminus, the 122-residue chain is Small ribosomal subunit protein uS13 (122 aa).

Positions 93 to 122 are disordered; it reads RKGLPVRGQTTKNNARTRKGKRKTVGSASK. The segment covering 107-116 has biased composition (basic residues); sequence ARTRKGKRKT.

Belongs to the universal ribosomal protein uS13 family. Part of the 30S ribosomal subunit. Forms a loose heterodimer with protein S19. Forms two bridges to the 50S subunit in the 70S ribosome.

Located at the top of the head of the 30S subunit, it contacts several helices of the 16S rRNA. In the 70S ribosome it contacts the 23S rRNA (bridge B1a) and protein L5 of the 50S subunit (bridge B1b), connecting the 2 subunits; these bridges are implicated in subunit movement. Contacts the tRNAs in the A and P-sites. The polypeptide is Small ribosomal subunit protein uS13 (Wolinella succinogenes (strain ATCC 29543 / DSM 1740 / CCUG 13145 / JCM 31913 / LMG 7466 / NCTC 11488 / FDC 602W) (Vibrio succinogenes)).